We begin with the raw amino-acid sequence, 147 residues long: Small ribosomal subunit protein uS5 (147 aa).

The 64-residue stretch at 9–72 (FEEVIVDIGR…DDAFKNIIHV (64 aa)) folds into the S5 DRBM domain.

The protein belongs to the universal ribosomal protein uS5 family. In terms of assembly, part of the 30S ribosomal subunit. Contacts proteins S4 and S8.

With S4 and S12 plays an important role in translational accuracy. Its function is as follows. Located at the back of the 30S subunit body where it stabilizes the conformation of the head with respect to the body. This is Small ribosomal subunit protein uS5 from Campylobacter concisus (strain 13826).